Here is a 739-residue protein sequence, read N- to C-terminus: Catalase-peroxidase (739 aa).

Residues 1–33 are disordered; that stretch reads MSVEHPPIGEANTEPAAGGCPVTGRLRHPLQGG. The tryptophyl-tyrosyl-methioninium (Trp-Tyr) (with M-255) cross-link spans 106–229; the sequence is WHSAGTYRSS…LAAVQMGLIY (124 aa). His-107 functions as the Proton acceptor in the catalytic mechanism. A disordered region spans residues 113–134; the sequence is RSSDGRGGANTGQQRFAPLNSW. The tryptophyl-tyrosyl-methioninium (Tyr-Met) (with W-106) cross-link spans 229–255; sequence YVNPEGPNGNPDPLAAAVDIKDTFGRM. His-270 is a heme b binding site.

The protein belongs to the peroxidase family. Peroxidase/catalase subfamily. As to quaternary structure, homodimer or homotetramer. It depends on heme b as a cofactor. In terms of processing, formation of the three residue Trp-Tyr-Met cross-link is important for the catalase, but not the peroxidase activity of the enzyme.

It carries out the reaction H2O2 + AH2 = A + 2 H2O. It catalyses the reaction 2 H2O2 = O2 + 2 H2O. In terms of biological role, bifunctional enzyme with both catalase and broad-spectrum peroxidase activity. This chain is Catalase-peroxidase, found in Nocardia farcinica (strain IFM 10152).